The sequence spans 663 residues: uncharacterized protein (663 aa).

Residue Gly207–Thr214 participates in ATP binding.

This sequence belongs to the DNA2/NAM7 helicase family.

This is an uncharacterized protein from Methanocaldococcus jannaschii (strain ATCC 43067 / DSM 2661 / JAL-1 / JCM 10045 / NBRC 100440) (Methanococcus jannaschii).